We begin with the raw amino-acid sequence, 185 residues long: MNSMSFLISTLFDLYIMVVILRIWLQAARADFYNPFSQFIVKATQPVIGPLRRIIPSVGNIDLATVLFAYVLCVLKFVVLILIASNGSVSFSADFLFLGLLSLIKAAGGLLFWVLLIRAILSWVSQGRSPIEYVFHQLTEPMCAPIRRIIPAIGGLDLSVLVLFIGLQFANFLMGDIIGPIWFQL.

A run of 4 helical transmembrane segments spans residues 5-25, 63-83, 97-117, and 149-169; these read SFLI…RIWL, LATV…LILI, FLGL…VLLI, and IIPA…GLQF.

This sequence belongs to the YggT family.

The protein resides in the cell membrane. This is an uncharacterized protein from Vibrio alginolyticus.